We begin with the raw amino-acid sequence, 456 residues long: RUN domain-containing protein 3B (456 aa).

The tract at residues 1-26 is disordered; the sequence is MASRSLGGLSGIRGGGGGGGKKSLSS. Positions 8-21 are enriched in gly residues; that stretch reads GLSGIRGGGGGGGK. An Omega-N-methylarginine modification is found at arginine 13. One can recognise an RUN domain in the interval 57 to 189; that stretch reads DDSSPEFNNF…IDFSFCLKGE (133 aa). Residues serine 215 and serine 216 each carry the phosphoserine modification. The stretch at 300–325 forms a coiled coil; sequence AHKLEKEQLEYIIVELQDQLTVLKNN. Residues 382 to 405 form a disordered region; it reads SLSQTSLDPGQSQEGDGKQDTLNI.

Belongs to the RUNDC3 family. As to quaternary structure, interacts with RAP2A.

This Macaca fascicularis (Crab-eating macaque) protein is RUN domain-containing protein 3B (RUNDC3B).